The primary structure comprises 422 residues: NADH-quinone oxidoreductase subunit D 1 (422 aa).

It belongs to the complex I 49 kDa subunit family. NDH-1 is composed of 14 different subunits. Subunits NuoB, C, D, E, F, and G constitute the peripheral sector of the complex.

The protein resides in the cell membrane. It catalyses the reaction a quinone + NADH + 5 H(+)(in) = a quinol + NAD(+) + 4 H(+)(out). NDH-1 shuttles electrons from NADH, via FMN and iron-sulfur (Fe-S) centers, to quinones in the respiratory chain. The immediate electron acceptor for the enzyme in this species is believed to be ubiquinone. Couples the redox reaction to proton translocation (for every two electrons transferred, four hydrogen ions are translocated across the cytoplasmic membrane), and thus conserves the redox energy in a proton gradient. The protein is NADH-quinone oxidoreductase subunit D 1 of Herpetosiphon aurantiacus (strain ATCC 23779 / DSM 785 / 114-95).